The primary structure comprises 192 residues: Protein FAM169BP (192 aa).

The tract at residues 121-192 (YQAHPGNSED…PPGKLTRSSP (72 aa)) is disordered. A compositionally biased stretch (acidic residues) spans 159–177 (EELEDTKDDPECGVEEEDA).

This sequence belongs to the FAM169 family.

This is Protein FAM169BP from Homo sapiens (Human).